A 71-amino-acid chain; its full sequence is Alpha-elapitoxin-Nn3a (71 aa).

5 disulfide bridges follow: Cys-3/Cys-20, Cys-14/Cys-42, Cys-26/Cys-30, Cys-46/Cys-56, and Cys-57/Cys-62.

This sequence belongs to the three-finger toxin family. Long-chain subfamily. Type II alpha-neurotoxin sub-subfamily. In terms of tissue distribution, expressed by the venom gland.

It is found in the secreted. In terms of biological role, nicotinic acetylcholine receptor antagonist. Binds to muscle nicotinic acetylcholine receptor (nAChR) and inhibits acetylcholine from binding to the receptor, thereby impairing neuromuscular transmission. Produces peripheral paralysis by blocking neuromuscular transmission at the postsynaptic site. Induces concentration-dependent inhibition of indirect twitches and abolishes contractile responses of tissues to exogenous acetylcholine and carbachol, in the chick biventer cervicis nerve-muscle preparation at 100-300 nM (in vitro). Prior incubation of tissues with Indian polyvalent antivenom (1 ml/0.6 mg) prevents the neurotoxic effects at 100 nM (in vitro). Addition of Indian polyvalent antivenom (1 ml/0.6 mg) at the t90 time point partially restores the neurotoxic effects (in vitro). Displays a reversible antagonism of concentration-response curves to carbachol, with a pA2 of 8.17 (in vitro). In Naja naja (Indian cobra), this protein is Alpha-elapitoxin-Nn3a.